A 76-amino-acid polypeptide reads, in one-letter code: uORF2 protein (76 aa).

In terms of biological role, plays a role in viral replication. This Zika virus (isolate ZIKV/Human/French Polynesia/10087PF/2013) (ZIKV) protein is uORF2 protein.